Consider the following 85-residue polypeptide: Large ribosomal subunit protein bL27 (85 aa).

Residues 1-10 (MAQKKGGGST) show a composition bias toward gly residues. The segment at 1-20 (MAQKKGGGSTRNGRDSKPKM) is disordered.

Belongs to the bacterial ribosomal protein bL27 family.

The chain is Large ribosomal subunit protein bL27 from Delftia acidovorans (strain DSM 14801 / SPH-1).